A 2378-amino-acid polypeptide reads, in one-letter code: Dimodular nonribosomal peptide synthase (2378 aa).

Carrier domains follow at residues 961–1036 (APRT…DLAQ) and 2036–2111 (GPRT…EMGS). Residues Ser-996 and Ser-2071 each carry the O-(pantetheine 4'-phosphoryl)serine modification.

It belongs to the ATP-dependent AMP-binding enzyme family. Requires pantetheine 4'-phosphate as cofactor.

The catalysed reaction is holo-[peptidyl-carrier protein] + L-threonine + ATP = L-threonyl-[peptidyl-carrier protein] + AMP + diphosphate. The enzyme catalyses holo-[peptidyl-carrier protein] + glycine + ATP = glycyl-[peptidyl-carrier protein] + AMP + diphosphate. It participates in siderophore biosynthesis; bacillibactin biosynthesis. In terms of biological role, specifically adenylates L-threonine and, to a lesser extent, glycine and covalently loads both amino acids onto their corresponding peptidyl carrier domains. The polypeptide is Dimodular nonribosomal peptide synthase (dhbF) (Bacillus subtilis (strain 168)).